Reading from the N-terminus, the 463-residue chain is L-seryl-tRNA(Sec) selenium transferase (463 aa).

The residue at position 295 (Lys295) is an N6-(pyridoxal phosphate)lysine.

The protein belongs to the SelA family. Homodecamer; pentamer of dimers. Binds only one seryl-tRNA(Sec) per dimer. The cofactor is pyridoxal 5'-phosphate.

It localises to the cytoplasm. It carries out the reaction L-seryl-tRNA(Sec) + selenophosphate + H(+) = L-selenocysteinyl-tRNA(Sec) + phosphate. It participates in aminoacyl-tRNA biosynthesis; selenocysteinyl-tRNA(Sec) biosynthesis; selenocysteinyl-tRNA(Sec) from L-seryl-tRNA(Sec) (bacterial route): step 1/1. In terms of biological role, converts seryl-tRNA(Sec) to selenocysteinyl-tRNA(Sec) required for selenoprotein biosynthesis. This Salmonella schwarzengrund (strain CVM19633) protein is L-seryl-tRNA(Sec) selenium transferase.